Here is a 490-residue protein sequence, read N- to C-terminus: tRNA-guanine(15) transglycosylase (490 aa).

Aspartate 90 (nucleophile) is an active-site residue. Residues aspartate 125 and alanine 193 each coordinate substrate. 3 residues coordinate Zn(2+): cysteine 276, cysteine 278, and cysteine 281.

The protein belongs to the archaeosine tRNA-ribosyltransferase family. Requires Zn(2+) as cofactor.

It catalyses the reaction guanosine(15) in tRNA + 7-cyano-7-deazaguanine = 7-cyano-7-carbaguanosine(15) in tRNA + guanine. It participates in tRNA modification; archaeosine-tRNA biosynthesis. In terms of biological role, exchanges the guanine residue with 7-cyano-7-deazaguanine (preQ0) at position 15 in the dihydrouridine loop (D-loop) of archaeal tRNAs. This Methanosarcina mazei (strain ATCC BAA-159 / DSM 3647 / Goe1 / Go1 / JCM 11833 / OCM 88) (Methanosarcina frisia) protein is tRNA-guanine(15) transglycosylase.